The primary structure comprises 406 residues: DNA-binding transcriptional repressor Mlc (406 aa).

The H-T-H motif DNA-binding region spans 33–42 (RIDLSRLAQL). Zn(2+)-binding residues include histidine 247, cysteine 257, cysteine 259, and cysteine 264.

Belongs to the ROK (NagC/XylR) family. As to quaternary structure, homodimer. Homotetramer. There is probably an equilibrium between the dimeric and the tetrameric form. Interacts with dephosphorylated PtsG. Mlc and PtsG EIIB domain form a complex with the 1:1 stoichiometry. Interacts with MtfA.

The protein localises to the cytoplasm. Its activity is regulated as follows. Activity is modulated by glucose. In the presence of glucose, is inhibited by interaction with the dephosphorylated form of PtsG, which sequesters Mlc in the inner membrane and prevents Mlc binding to its target promoters. The restriction of conformational freedom resulting from the anchoring of four ends of Mlc to the membrane could be the primary cause of its loss of DNA-binding activity in vivo. Activity is also inhibited by interaction with the Mlc titration factor A (mtfA). The inactivation mechanisms of Mlc by dephosphorylated PtsG and MtfA differ significantly. Global regulator of carbohydrate metabolism. Represses the expression of several genes involved in sugar transport and utilization, in particular phosphoenolpyruvate-carbohydrate phosphotransferase system (PTS) genes. Represses expression of ptsG (EIICB(Glc)), which encodes the PTS system glucose-specific EIICB component. Also represses the expression of the manXYZ operon, encoding the mannose-specific PTS system, expression of malT, encoding the transcriptional activator of the maltose regulon, and expression of the pts operon, composed of the genes ptsH, ptsI and crr. Represses its own expression. Acts by binding to the regulatory region of the target genes. The chain is DNA-binding transcriptional repressor Mlc from Escherichia coli (strain K12).